A 130-amino-acid polypeptide reads, in one-letter code: Small ribosomal subunit protein uS8 (130 aa).

Belongs to the universal ribosomal protein uS8 family. In terms of assembly, part of the 30S ribosomal subunit. Contacts proteins S5 and S12.

In terms of biological role, one of the primary rRNA binding proteins, it binds directly to 16S rRNA central domain where it helps coordinate assembly of the platform of the 30S subunit. This Pectobacterium carotovorum subsp. carotovorum (strain PC1) protein is Small ribosomal subunit protein uS8.